The sequence spans 89 residues: MKTLLLTLVVVTIVCLDLGYTMQCKTCSFYTCPNSETCPDGKNICVKRSWTAVRGDGPKREIRRECAATCPPSKLGLTVFCCTTDNCNH.

Positions 1–21 are cleaved as a signal peptide; that stretch reads MKTLLLTLVVVTIVCLDLGYT. 5 disulfides stabilise this stretch: Cys24–Cys45, Cys27–Cys32, Cys38–Cys66, Cys70–Cys81, and Cys82–Cys87. Positions 54–56 match the Cell attachment site motif; it reads RGD.

The protein belongs to the three-finger toxin family. Ancestral subfamily. Orphan group V sub-subfamily. In terms of tissue distribution, expressed by the venom gland.

It localises to the secreted. In terms of biological role, exhibits M2 muscarinic acetylcholine receptor (CHRM2)-blocking activity, but has a weak binding activity toward nicotinic AChR. Moreover, it inhibits collagen-induced platelet aggregation. This is Gamma-bungarotoxin from Bungarus multicinctus (Many-banded krait).